The following is a 454-amino-acid chain: tRNA modification GTPase MnmE (454 aa).

Positions 23, 80, and 120 each coordinate (6S)-5-formyl-5,6,7,8-tetrahydrofolate. In terms of domain architecture, TrmE-type G spans glycine 216–glycine 377. Asparagine 226 contributes to the K(+) binding site. GTP is bound by residues asparagine 226–serine 231, threonine 245–threonine 251, aspartate 270–glycine 273, asparagine 335–aspartate 338, and serine 358–arginine 360. Serine 230 serves as a coordination point for Mg(2+). Residues threonine 245, isoleucine 247, and threonine 250 each coordinate K(+). Threonine 251 lines the Mg(2+) pocket. Lysine 454 is a (6S)-5-formyl-5,6,7,8-tetrahydrofolate binding site.

It belongs to the TRAFAC class TrmE-Era-EngA-EngB-Septin-like GTPase superfamily. TrmE GTPase family. As to quaternary structure, homodimer. Heterotetramer of two MnmE and two MnmG subunits. K(+) serves as cofactor.

It is found in the cytoplasm. Its function is as follows. Exhibits a very high intrinsic GTPase hydrolysis rate. Involved in the addition of a carboxymethylaminomethyl (cmnm) group at the wobble position (U34) of certain tRNAs, forming tRNA-cmnm(5)s(2)U34. This is tRNA modification GTPase MnmE from Enterobacter sp. (strain 638).